Here is a 366-residue protein sequence, read N- to C-terminus: tRNA/tmRNA (uracil-C(5))-methyltransferase (366 aa).

Residues glutamine 190, tyrosine 218, asparagine 223, glutamate 239, and aspartate 299 each contribute to the S-adenosyl-L-methionine site. Catalysis depends on cysteine 324, which acts as the Nucleophile. The Proton acceptor role is filled by glutamate 358.

The protein belongs to the class I-like SAM-binding methyltransferase superfamily. RNA M5U methyltransferase family. TrmA subfamily.

The enzyme catalyses uridine(54) in tRNA + S-adenosyl-L-methionine = 5-methyluridine(54) in tRNA + S-adenosyl-L-homocysteine + H(+). It catalyses the reaction uridine(341) in tmRNA + S-adenosyl-L-methionine = 5-methyluridine(341) in tmRNA + S-adenosyl-L-homocysteine + H(+). Functionally, dual-specificity methyltransferase that catalyzes the formation of 5-methyluridine at position 54 (m5U54) in all tRNAs, and that of position 341 (m5U341) in tmRNA (transfer-mRNA). This is tRNA/tmRNA (uracil-C(5))-methyltransferase from Salmonella agona (strain SL483).